The sequence spans 500 residues: Glutathione reductase (500 aa).

The FAD site is built by Ser12 and Gly13. Ser12 contributes to the glutathione binding site. Arg19 contributes to the glutathione binding site. Residues Glu32, Thr39, Cys40, and Lys48 each coordinate FAD. A disulfide bridge connects residues Cys40 and Cys45. Residue Tyr95 coordinates glutathione. Ala111 contacts FAD. NADP(+) contacts are provided by Ile187, Glu190, Arg207, Arg213, and Gly272. FAD-binding residues include Asp312 and Thr354. Position 362 (Arg362) interacts with glutathione. Val384 provides a ligand contact to NADP(+). His485 is an FAD binding site. The Proton acceptor role is filled by His485.

Belongs to the class-I pyridine nucleotide-disulfide oxidoreductase family. As to quaternary structure, homodimer. Requires FAD as cofactor.

It localises to the cytoplasm. It carries out the reaction 2 glutathione + NADP(+) = glutathione disulfide + NADPH + H(+). Functionally, catalyzes the reduction of glutathione disulfide (GSSG) to reduced glutathione (GSH). Constitutes the major mechanism to maintain a high GSH:GSSG ratio in the cytosol. The chain is Glutathione reductase from Plasmodium falciparum (isolate K1 / Thailand).